Here is a 99-residue protein sequence, read N- to C-terminus: Small ribosomal subunit protein bS20 (99 aa).

The protein belongs to the bacterial ribosomal protein bS20 family.

Functionally, binds directly to 16S ribosomal RNA. The polypeptide is Small ribosomal subunit protein bS20 (Prochlorococcus marinus (strain SARG / CCMP1375 / SS120)).